We begin with the raw amino-acid sequence, 225 residues long: PKHD-type hydroxylase YbiX (225 aa).

The region spanning 78–177 (TLSTPLFNRY…RVASFMWIQS (100 aa)) is the Fe2OG dioxygenase domain. Residues H96, D98, and H158 each contribute to the Fe cation site. Residue R168 participates in 2-oxoglutarate binding.

Fe(2+) serves as cofactor. L-ascorbate is required as a cofactor.

The protein is PKHD-type hydroxylase YbiX of Escherichia coli O17:K52:H18 (strain UMN026 / ExPEC).